The sequence spans 69 residues: Large ribosomal subunit protein bL28 (69 aa).

Belongs to the bacterial ribosomal protein bL28 family.

The protein is Large ribosomal subunit protein bL28 of Aquifex aeolicus (strain VF5).